An 874-amino-acid chain; its full sequence is Alanine--tRNA ligase (874 aa).

Zn(2+)-binding residues include His564, His568, Cys665, and His669.

This sequence belongs to the class-II aminoacyl-tRNA synthetase family. Zn(2+) is required as a cofactor.

It localises to the cytoplasm. The enzyme catalyses tRNA(Ala) + L-alanine + ATP = L-alanyl-tRNA(Ala) + AMP + diphosphate. Catalyzes the attachment of alanine to tRNA(Ala) in a two-step reaction: alanine is first activated by ATP to form Ala-AMP and then transferred to the acceptor end of tRNA(Ala). Also edits incorrectly charged Ser-tRNA(Ala) and Gly-tRNA(Ala) via its editing domain. In Acidovorax sp. (strain JS42), this protein is Alanine--tRNA ligase.